A 441-amino-acid polypeptide reads, in one-letter code: Cortexillin-2 (441 aa).

The actin-binding stretch occupies residues 1–229; the sequence is MDLNKEWEKV…VLYTSLFFHA (229 aa). 2 Calponin-homology (CH) domains span residues 9–117 and 126–231; these read KVQE…RKYR and KSSE…HAFR. 2 coiled-coil regions span residues 229–362 and 406–430; these read AFRA…RLGL and SFEE…KYLN.

Belongs to the cortexillin family. Homodimer; parallel.

It is found in the cytoplasm. It localises to the cytoskeleton. Functionally, actin-bundling protein. When linked to F-actin the actin filaments form preferentially anti-parallel bundles that associate into meshworks. Plays a major role in cytokinesis. Negatively regulates cortical localization of rapgap1. The sequence is that of Cortexillin-2 (ctxB) from Dictyostelium discoideum (Social amoeba).